A 92-amino-acid polypeptide reads, in one-letter code: Signal recognition particle 19 kDa protein (92 aa).

The protein belongs to the SRP19 family. In terms of assembly, part of the signal recognition particle protein translocation system, which is composed of SRP and FtsY. Archaeal SRP consists of a 7S RNA molecule of 300 nucleotides and two protein subunits: SRP54 and SRP19.

Its subcellular location is the cytoplasm. In terms of biological role, involved in targeting and insertion of nascent membrane proteins into the cytoplasmic membrane. Binds directly to 7S RNA and mediates binding of the 54 kDa subunit of the SRP. This Halobacterium salinarum (strain ATCC 29341 / DSM 671 / R1) protein is Signal recognition particle 19 kDa protein.